The sequence spans 260 residues: UPF0246 protein BceJ2315_22780 (260 aa).

Belongs to the UPF0246 family.

The polypeptide is UPF0246 protein BceJ2315_22780 (Burkholderia cenocepacia (strain ATCC BAA-245 / DSM 16553 / LMG 16656 / NCTC 13227 / J2315 / CF5610) (Burkholderia cepacia (strain J2315))).